Here is a 230-residue protein sequence, read N- to C-terminus: N-(5'-phosphoribosyl)anthranilate isomerase (230 aa).

It belongs to the TrpF family.

The catalysed reaction is N-(5-phospho-beta-D-ribosyl)anthranilate = 1-(2-carboxyphenylamino)-1-deoxy-D-ribulose 5-phosphate. The protein operates within amino-acid biosynthesis; L-tryptophan biosynthesis; L-tryptophan from chorismate: step 3/5. The sequence is that of N-(5'-phosphoribosyl)anthranilate isomerase from Syntrophus aciditrophicus (strain SB).